The chain runs to 603 residues: ATP-dependent RNA helicase MRH4, mitochondrial (603 aa).

A mitochondrion-targeting transit peptide spans 1-71 (MISTGLPLFT…GNGAGAGARV (71 aa)). The short motif at 151-158 (VIKPTPVQ) is the Q motif element. Positions 193-409 (KNEEQKTKIF…LRLFPDQKSL (217 aa)) constitute a Helicase ATP-binding domain. 206–213 (AETGSGKT) provides a ligand contact to ATP. Residues 357 to 360 (DEAD) carry the DEAD box motif. Positions 443–603 (CLAQAIYAIS…SAIMKGSRIG (161 aa)) constitute a Helicase C-terminal domain.

Belongs to the DEAD box helicase family. MRH4 subfamily.

It is found in the mitochondrion. It catalyses the reaction ATP + H2O = ADP + phosphate + H(+). ATP-binding RNA helicase involved in mitochondrial RNA metabolism. Required for maintenance of mitochondrial DNA. The sequence is that of ATP-dependent RNA helicase MRH4, mitochondrial (MRH4) from Lodderomyces elongisporus (strain ATCC 11503 / CBS 2605 / JCM 1781 / NBRC 1676 / NRRL YB-4239) (Yeast).